We begin with the raw amino-acid sequence, 84 residues long: Small ribosomal subunit protein uS17 (84 aa).

This sequence belongs to the universal ribosomal protein uS17 family. In terms of assembly, part of the 30S ribosomal subunit.

Its function is as follows. One of the primary rRNA binding proteins, it binds specifically to the 5'-end of 16S ribosomal RNA. The protein is Small ribosomal subunit protein uS17 of Clostridium botulinum (strain Alaska E43 / Type E3).